Here is a 399-residue protein sequence, read N- to C-terminus: Bone morphogenetic protein 8A (399 aa).

The N-terminal stretch at 1–19 is a signal peptide; the sequence is MAMRPGPLWLLGLALCALG. Positions 20 to 260 are excised as a propeptide; that stretch reads GGHGPRPPHT…ASQSPVRAPR (241 aa). Asn-155 carries N-linked (GlcNAc...) asparagine glycosylation. The disordered stretch occupies residues 257 to 286; that stretch reads RAPRAARPLKRRQPKKTNELPHPNKLPGIF. 3 disulfide bridges follow: Cys-298-Cys-364, Cys-327-Cys-396, and Cys-331-Cys-398. A glycan (N-linked (GlcNAc...) asparagine) is linked at Asn-340.

It belongs to the TGF-beta family. In terms of assembly, homodimer; disulfide-linked. As to expression, expressed in testis. expressed in trophoblast cells of the labyrinthine region of the placenta and in the inner root sheath of hair follicles of early postnatal skin. Expressed predominantly in the neonatal mouse spermatogonia.

The protein localises to the secreted. Functionally, growth factor of the TGF-beta superfamily that plays important role in various biological processes, including spermatogenesis, osteogenesis, steroidogenesis as well as regulation of energy balance. Initiates the canonical BMP signaling cascade by associating with type I receptor BMPR1A and type II receptor BMPR2. Once all three components are bound together in a complex at the cell surface, BMPR2 phosphorylates and activates BMPR1A. In turn, BMPR1A propagates signal by phosphorylating SMAD1/5/8 that travel to the nucleus and act as activators and repressors of transcription of target genes. In addition, activates the SMAD2/3 pathway. In Mus musculus (Mouse), this protein is Bone morphogenetic protein 8A (Bmp8a).